The sequence spans 290 residues: MFQGSIVAIVTPFKNGAVDEEKLRELVEFQIENGTDAIVPCGTTGESSTLSYVEHDRVIQVVVEQVNKRVPVIAGTGSNSTHEAIEITQHAKELGADGALLVTPYYNKPSQEGLFRHYKAVADAVALPQILYNVPGRTGVNLLPETVARLSVHQNIVAIKEATGSLQQASEVLALCGDKIDVLSGDDFITLPIMAAGGKGVISVTANIMPKEVSSLVDAFNAGNLEEARRLHLYLLKISNAMFIESNPVPVKAAVSLMGKCSSEVRLPLAPLMEANLAKLTAIMKEYKLI.

Residue T44 coordinates pyruvate. Y132 (proton donor/acceptor) is an active-site residue. Catalysis depends on K160, which acts as the Schiff-base intermediate with substrate. Position 202 (I202) interacts with pyruvate.

This sequence belongs to the DapA family. As to quaternary structure, homotetramer; dimer of dimers.

The protein localises to the cytoplasm. The enzyme catalyses L-aspartate 4-semialdehyde + pyruvate = (2S,4S)-4-hydroxy-2,3,4,5-tetrahydrodipicolinate + H2O + H(+). It functions in the pathway amino-acid biosynthesis; L-lysine biosynthesis via DAP pathway; (S)-tetrahydrodipicolinate from L-aspartate: step 3/4. Functionally, catalyzes the condensation of (S)-aspartate-beta-semialdehyde [(S)-ASA] and pyruvate to 4-hydroxy-tetrahydrodipicolinate (HTPA). This chain is 4-hydroxy-tetrahydrodipicolinate synthase, found in Geobacter sp. (strain M21).